A 459-amino-acid polypeptide reads, in one-letter code: Putrescine aminotransferase (459 aa).

Pyridoxal 5'-phosphate contacts are provided by residues 150–151 (GT) and Gln274. The residue at position 300 (Lys300) is an N6-(pyridoxal phosphate)lysine. Position 332 (Thr332) interacts with pyridoxal 5'-phosphate.

This sequence belongs to the class-III pyridoxal-phosphate-dependent aminotransferase family. Putrescine aminotransferase subfamily. The cofactor is pyridoxal 5'-phosphate.

The catalysed reaction is an alkane-alpha,omega-diamine + 2-oxoglutarate = an omega-aminoaldehyde + L-glutamate. It carries out the reaction putrescine + 2-oxoglutarate = 1-pyrroline + L-glutamate + H2O. It catalyses the reaction cadaverine + 2-oxoglutarate = 5-aminopentanal + L-glutamate. Its pathway is amine and polyamine degradation; putrescine degradation; 4-aminobutanal from putrescine (transaminase route): step 1/1. In terms of biological role, catalyzes the aminotransferase reaction from putrescine to 2-oxoglutarate, leading to glutamate and 4-aminobutanal, which spontaneously cyclizes to form 1-pyrroline. This is the first step in one of two pathways for putrescine degradation, where putrescine is converted into 4-aminobutanoate (gamma-aminobutyrate or GABA) via 4-aminobutanal. Also functions as a cadaverine transaminase in a a L-lysine degradation pathway to succinate that proceeds via cadaverine, glutarate and L-2-hydroxyglutarate. This chain is Putrescine aminotransferase, found in Salmonella heidelberg (strain SL476).